The sequence spans 88 residues: Small ribosomal subunit protein uS17 (88 aa).

The protein belongs to the universal ribosomal protein uS17 family. Part of the 30S ribosomal subunit.

One of the primary rRNA binding proteins, it binds specifically to the 5'-end of 16S ribosomal RNA. This is Small ribosomal subunit protein uS17 from Prochlorococcus marinus (strain NATL1A).